Reading from the N-terminus, the 89-residue chain is Small ribosomal subunit protein uS14A (89 aa).

The protein belongs to the universal ribosomal protein uS14 family. As to quaternary structure, part of the 30S ribosomal subunit. Contacts proteins S3 and S10.

Its function is as follows. Binds 16S rRNA, required for the assembly of 30S particles and may also be responsible for determining the conformation of the 16S rRNA at the A site. This chain is Small ribosomal subunit protein uS14A, found in Streptococcus agalactiae serotype Ia (strain ATCC 27591 / A909 / CDC SS700).